Consider the following 318-residue polypeptide: uncharacterized protein (318 aa).

This is an uncharacterized protein from Ictaluridae (bullhead catfishes).